We begin with the raw amino-acid sequence, 393 residues long: Putative competence-damage inducible protein (393 aa).

It belongs to the CinA family.

The protein is Putative competence-damage inducible protein of Streptococcus suis (strain 98HAH33).